Here is a 185-residue protein sequence, read N- to C-terminus: Bcl-2-like protein 10 (185 aa).

The BH1 signature appears at 76–95 (LSNDQEFNWGRLVMLLAFVG). The short motif at 138–149 (WLEAHGGWDGFC) is the BH2 element. Residues 160 to 182 (FWRRLLIRAILSCFFATAIFYIW) traverse the membrane as a helical segment.

The protein belongs to the Bcl-2 family. In terms of assembly, interacts with BAX. Interacts with BCL2, BCL2L1/BCLX. Interacts with APAF1. Interacts with ITPR1, ITPR2 and ITPR3; the interaction with ITPR1 is increased in the presence of AHCLY1. Interacts with AHCYL1. Interacts with HIP1R (via ENTH and I/LWEQ domains). Interacts with CASP9. Interacts with BCL2L11/BIM. Interacts with BIK. Interacts with UBQLN4. Interacts with NME2/NM23-H2. Interacts with and PMAIP1/NOXA. Interacts with TPX2. Interacts with UBQLN1; in the cytoplasm. Interacts (via BH1 domain) with BECN1. The cofactor is Ca(2+). Monoubiquitinated by UBQLN1; results in stabilization of BCL2L10 protein abundance and in relocalization from mitochondria to cytoplasm. In terms of tissue distribution, expressed in oligodendroglial lineage cells.

It localises to the mitochondrion. The protein resides in the nucleus membrane. The protein localises to the endoplasmic reticulum. It is found in the cytoplasm. Its subcellular location is the cytoskeleton. It localises to the spindle. Functionally, promotes cell survival by suppressing apoptosis induced by BAX but not BAK. Increases binding of AHCYL1/IRBIT to ITPR1. Reduces ITPR1-mediated calcium release from the endoplasmic reticulum cooperatively with AHCYL1/IRBIT under normal cellular conditions. Under apoptotic stress conditions, dissociates from ITPR1 and is displaced from mitochondria-associated endoplasmic reticulum membranes, leading to increased Ca(2+) transfer to mitochondria which promotes apoptosis. Required for the correct formation of the microtubule organizing center during oocyte cell division, potentially via regulation of protein abundance and localization of other microtubule organizing center components such as AURKA and TPX2. The protein is Bcl-2-like protein 10 of Rattus norvegicus (Rat).